The following is a 183-amino-acid chain: Ribosome rescue factor SmrB (183 aa).

Residues Leu-98 to Glu-173 enclose the Smr domain.

Belongs to the SmrB family. Associates with collided ribosomes, but not with correctly translating polysomes.

Functionally, acts as a ribosome collision sensor. Detects stalled/collided disomes (pairs of ribosomes where the leading ribosome is stalled and a second ribosome has collided with it) and endonucleolytically cleaves mRNA at the 5' boundary of the stalled ribosome. Stalled/collided disomes form a new interface (primarily via the 30S subunits) that binds SmrB. Cleaved mRNA becomes available for tmRNA ligation, leading to ribosomal subunit dissociation and rescue of stalled ribosomes. The protein is Ribosome rescue factor SmrB of Salmonella agona (strain SL483).